The primary structure comprises 148 residues: Deoxyuridine 5'-triphosphate nucleotidohydrolase (148 aa).

Substrate contacts are provided by residues 67–69 (RSG), Asn80, 84–86 (TID), and Lys94.

This sequence belongs to the dUTPase family. Mg(2+) serves as cofactor.

The enzyme catalyses dUTP + H2O = dUMP + diphosphate + H(+). It functions in the pathway pyrimidine metabolism; dUMP biosynthesis; dUMP from dCTP (dUTP route): step 2/2. This enzyme is involved in nucleotide metabolism: it produces dUMP, the immediate precursor of thymidine nucleotides and it decreases the intracellular concentration of dUTP so that uracil cannot be incorporated into DNA. The polypeptide is Deoxyuridine 5'-triphosphate nucleotidohydrolase (Orientia tsutsugamushi (strain Boryong) (Rickettsia tsutsugamushi)).